The sequence spans 143 residues: Transcriptional regulator MraZ (143 aa).

SpoVT-AbrB domains lie at 5 to 47 (EYKH…SLKE) and 76 to 119 (ACEC…SENN).

This sequence belongs to the MraZ family. As to quaternary structure, forms oligomers.

Its subcellular location is the cytoplasm. The protein localises to the nucleoid. This is Transcriptional regulator MraZ from Caldicellulosiruptor bescii (strain ATCC BAA-1888 / DSM 6725 / KCTC 15123 / Z-1320) (Anaerocellum thermophilum).